The primary structure comprises 248 residues: Phosphoglycerate mutase (248 aa).

Residues 8–15, 21–22, arginine 60, 87–90, lysine 98, 114–115, and 183–184 each bind substrate; these read RHGQSEWN, TG, ERHY, RR, and GN. Histidine 9 serves as the catalytic Tele-phosphohistidine intermediate. The active-site Proton donor/acceptor is the glutamate 87.

Belongs to the phosphoglycerate mutase family. BPG-dependent PGAM subfamily.

Its subcellular location is the cytoplasm. It carries out the reaction (2R)-2-phosphoglycerate = (2R)-3-phosphoglycerate. Its pathway is carbohydrate degradation; glycolysis; pyruvate from D-glyceraldehyde 3-phosphate: step 3/5. The chain is Phosphoglycerate mutase (GPM1) from Candida albicans (strain SC5314 / ATCC MYA-2876) (Yeast).